The following is a 4574-amino-acid chain: E3 ubiquitin-protein ligase MYCBP2 (4574 aa).

Disordered stretches follow at residues 92-115 (RGKK…VKTR) and 599-620 (SASK…PYKP). RCC1 repeat units lie at residues 591–646 (DGSV…IVTK), 690–746 (SGEV…MMCQ), 943–993 (NGDV…VLLM), and 995–1051 (GQVF…LRID). Residues 611 to 620 (SRRQPKPYKP) show a composition bias toward basic residues. C1733 and C1850 are joined by a disulfide. Disordered stretches follow at residues 1976-1998 (APPT…EQGL) and 2313-2332 (LQRL…LTFG). 2 stretches are compositionally biased toward polar residues: residues 1981–1998 (NPNQ…EQGL) and 2317–2328 (PGTSSNSATGTD). The stretch at 2336 to 2417 (APKLEATYEP…IHVTIDGIEI (82 aa)) is one Filamin repeat. Disordered stretches follow at residues 2613 to 2824 (GFDY…PSPH), 2845 to 2922 (SNDE…KQAM), 3085 to 3116 (SPGS…KAEV), 3345 to 3365 (PGSN…TDSD), and 3505 to 3526 (FETE…EQEK). Basic and acidic residues-rich tracts occupy residues 2639–2663 (HRQE…KSKN) and 2678–2688 (DTGKLRSDSHS). The segment covering 2716–2729 (NPGSRSSSPKQKTF) has biased composition (polar residues). Low complexity predominate over residues 2730 to 2745 (TSGRSSPSSTSSPRSS). Basic and acidic residues-rich tracts occupy residues 2761 to 2772 (VHLDPPRERSKS), 2854 to 2864 (SELHNAEEGSS), and 2874 to 2883 (PVKEELESRS). Composition is skewed to basic residues over residues 2887-2900 (VSRK…RPKK) and 3102-3111 (KKTKKEKKKK). Over residues 3515–3526 (NKGNKENLEQEK) the composition is skewed to basic and acidic residues. The region spanning 3617–3795 (FNISVQSGYE…SVAQQKNCEA (179 aa)) is the DOC domain. The disordered stretch occupies residues 3815-3841 (GDAEPTPEQEEKNLLSSPEGEDKAPSD). 10 residues coordinate Zn(2+): C4324, C4327, C4342, H4344, H4347, C4350, C4371, C4374, C4440, and C4443. The segment at 4324–4375 (CMICFTEALSAAPAIQLDCSHVFHLQCTRRVLENRWLGPRITFGFMSCPICK) adopts an RING-type; atypical zinc-finger fold. The segment at 4435 to 4572 (YAYYVCFKCK…LGCGVCRNAH (138 aa)) is tandem cysteine domain. The active site involves C4454. 7 residues coordinate Zn(2+): C4471, C4474, C4483, H4486, C4495, C4498, and C4499. Residue C4506 is part of the active site. C4513, C4516, C4534, C4548, H4554, C4565, and C4568 together coordinate Zn(2+).

This sequence belongs to the RING-Cys relay (RCR) family. In terms of tissue distribution, widely expressed when the visual system begins developing. In the eye, expressed in all cells, including retinal ganglion cells, with no obvious gradient.

The protein localises to the nucleus. The protein resides in the cell projection. It localises to the axon. It is found in the cytoplasm. Its subcellular location is the cytoskeleton. The enzyme catalyses [E2 ubiquitin-conjugating enzyme]-S-ubiquitinyl-L-cysteine + [acceptor protein]-L-threonine = [E2 ubiquitin-conjugating enzyme]-L-cysteine + [acceptor protein]-3-O-ubiquitinyl-L-threonine.. Its pathway is protein modification; protein ubiquitination. In terms of biological role, atypical E3 ubiquitin-protein ligase which specifically mediates ubiquitination of threonine and serine residues on target proteins, instead of ubiquitinating lysine residues. Shows esterification activity towards both threonine and serine, with a preference for threonine, and acts via two essential catalytic cysteine residues that relay ubiquitin to its substrate via thioester intermediates. Interacts with the E2 enzymes UBE2D1, UBE2D3, UBE2E1 and UBE2L3. Plays a key role in neural development, probably by mediating ubiquitination of threonine residues on target proteins. Involved in different processes such as regulation of neurite outgrowth, synaptic growth, synaptogenesis and axon degeneration. Required in the visual system for correct fasciculation, targeting and mapping of retinal axons. Acts as a regulator of pteridine synthesis. May play a role in the regulation of the circadian clock gene expression. In Danio rerio (Zebrafish), this protein is E3 ubiquitin-protein ligase MYCBP2.